Reading from the N-terminus, the 308-residue chain is Membrane protein insertase YidC 1 (308 aa).

A signal peptide spans 1 to 22; that stretch reads MKSIKRFALSAMGAAMLLVLTG. Cys23 is lipidated: N-palmitoyl cysteine. A lipid anchor (S-diacylglycerol cysteine) is attached at Cys23. Transmembrane regions (helical) follow at residues 60-80, 135-155, 168-188, 211-225, and 230-252; these read FGVAIIIVTIIVRLIILPLGI, FGGVGCFPILLQMPFFSAIYF, YLGIPLGSPSMILVACAGVLY, MIYMSPLMIVVFSLF, and VTLYWVVGGFMMILQQFIVNYIV. A disordered region spans residues 263–308; that stretch reads ELAKNPSKASAFSTPSGRKDVTPEQPTAITSKKKHKNRNAGKQRSR. The segment covering 269–278 has biased composition (polar residues); sequence SKASAFSTPS. Over residues 293–308 the composition is skewed to basic residues; sequence SKKKHKNRNAGKQRSR.

This sequence belongs to the OXA1/ALB3/YidC family. Type 2 subfamily.

The protein resides in the cell membrane. Required for the insertion and/or proper folding and/or complex formation of integral membrane proteins into the membrane. Involved in integration of membrane proteins that insert both dependently and independently of the Sec translocase complex, as well as at least some lipoproteins. The sequence is that of Membrane protein insertase YidC 1 from Streptococcus pneumoniae (strain ATCC BAA-255 / R6).